Reading from the N-terminus, the 488-residue chain is Proline--tRNA ligase (488 aa).

Belongs to the class-II aminoacyl-tRNA synthetase family. ProS type 3 subfamily. As to quaternary structure, homodimer.

It is found in the cytoplasm. It catalyses the reaction tRNA(Pro) + L-proline + ATP = L-prolyl-tRNA(Pro) + AMP + diphosphate. Its function is as follows. Catalyzes the attachment of proline to tRNA(Pro) in a two-step reaction: proline is first activated by ATP to form Pro-AMP and then transferred to the acceptor end of tRNA(Pro). The protein is Proline--tRNA ligase of Borreliella burgdorferi (strain ZS7) (Borrelia burgdorferi).